The following is a 113-amino-acid chain: Cell division protein FtsB (113 aa).

Residues 1-3 lie on the Cytoplasmic side of the membrane; it reads MRL. Residues 4-21 traverse the membrane as a helical segment; the sequence is ISLLLFVLLLAIQYPLWL. Topologically, residues 22–113 are periplasmic; the sequence is GKGGWLRVWD…PNSVAGRGGH (92 aa). Residues 34-64 are a coiled coil; that stretch reads RQVNEQTVHNQALKLRNAKLEGEVKDLQDGT. The tract at residues 93–113 is disordered; the sequence is KVSATPPLPPPPNSVAGRGGH.

This sequence belongs to the FtsB family. Part of a complex composed of FtsB, FtsL and FtsQ.

It localises to the cell inner membrane. Essential cell division protein. May link together the upstream cell division proteins, which are predominantly cytoplasmic, with the downstream cell division proteins, which are predominantly periplasmic. The chain is Cell division protein FtsB from Cupriavidus metallidurans (strain ATCC 43123 / DSM 2839 / NBRC 102507 / CH34) (Ralstonia metallidurans).